Reading from the N-terminus, the 569-residue chain is MAAAAPVAADDDERRRRPGAALEDSRSQEGANGEAESGELSRLRAELAGALAEMETMKAVAEVSESTKAEAVAAVQRQCQEEVASLQAILKDSISSYEAQITALKQERQQQQQDCEEKERELGRLKQLLSRAYPLDSLEKQMEKAHEDSEKLREIVLPMEKEIEELKAKLLRAEELIQEIQRRPRHAPSLHGSTELLPLSRDPSPPLEPLEELSGDGGPAAEAFAHNCDDSASISSFSLGGGVGSSSSLPQSRQGLSPEQEETASLVSTGTLVPEGIYLPPPGYQLVPDTQWEQLQTEGRQLQKDLESVSRERDELQEGLRRSNEDCAKQMQVLLAQVQNSEQLLRTLQGTVSQAQERVQLQMAELVTTHKCLHHEVKRLNEENQGLRAEQLPSSAPQGSQQEQGEEESLPSSVPELQQLLCCTRQEARARLQAQEHGAERLRIEIVTLREALEEETVARASLEGQLRVQREETEVLEASLCSLRTEMERVQQEQSKAQLPDLLSEQRAKVLRLQAELETSEQVQRDFVRLSQALQVRLERIRQAETLEQVRSIMDEAPLTDVRDIKDT.

3 disordered regions span residues 1 to 41 (MAAA…GELS), 180 to 265 (IQRR…ETAS), and 388 to 411 (RAEQ…ESLP). Alanine 2 is modified (N-acetylalanine). A coiled-coil region spans residues 34-187 (EAESGELSRL…QEIQRRPRHA (154 aa)). Phosphoserine occurs at positions 189 and 193. Residue serine 200 is modified to Phosphoserine; by GSK3-alpha. Serine 204 bears the Phosphoserine mark. Low complexity-rich tracts occupy residues 245 to 257 (SSSS…QGLS) and 393 to 403 (PSSAPQGSQQE). Residues 289–523 (DTQWEQLQTE…LQAELETSEQ (235 aa)) are a coiled coil.

The protein belongs to the rabaptin family. Heterodimer with RABGEF1. The dimer binds RAB5A that has been activated by GTP-binding. Interacts with SDCCAG8; this interaction is important for ciliogenesis regulation. Interacts with RAB4A; this interaction may mediate VEGFR2 cell surface expression.

The protein localises to the cytoplasm. The protein resides in the early endosome. Its subcellular location is the cytoskeleton. It localises to the microtubule organizing center. It is found in the centrosome. The protein localises to the cilium basal body. Plays a role in membrane trafficking and in homotypic early endosome fusion. Participates in arteriogenesis by regulating vascular endothelial growth factor receptor 2/VEGFR2 cell surface expression and endosomal trafficking. By interacting with SDCCAG8, localizes to centrosomes and plays a critical role in ciliogenesis. The sequence is that of Rab GTPase-binding effector protein 2 (RABEP2) from Homo sapiens (Human).